The sequence spans 402 residues: D-galactonate dehydratase family member RspA (402 aa).

Positions 37 and 122 each coordinate substrate. Tyr159 acts as the Proton donor/acceptor in catalysis. A Mg(2+)-binding site is contributed by Asp210. His212 serves as the catalytic Proton donor/acceptor. Positions 236 and 262 each coordinate Mg(2+). Glu262, Arg283, His312, Asp316, and Glu339 together coordinate substrate.

This sequence belongs to the mandelate racemase/muconate lactonizing enzyme family. GalD subfamily. It depends on Mg(2+) as a cofactor.

The catalysed reaction is D-mannonate = 2-dehydro-3-deoxy-D-gluconate + H2O. Functionally, has low D-mannonate dehydratase activity (in vitro), suggesting that this is not a physiological substrate and that it has no significant role in D-mannonate degradation in vivo. Has no detectable activity with a panel of 70 other acid sugars (in vitro). The polypeptide is D-galactonate dehydratase family member RspA (rspA) (Cellvibrio japonicus (strain Ueda107) (Pseudomonas fluorescens subsp. cellulosa)).